We begin with the raw amino-acid sequence, 232 residues long: Vesicle transport through interaction with t-SNAREs homolog 1B (232 aa).

N-acetylalanine is present on Ala2. 2 interaction with CLINT1 regions span residues 2–23 and 69–73; these read ATSA…GLLE and APLTF. Topologically, residues 2–208 are cytoplasmic; the sequence is ATSAASSEHF…SRKVITNKLL (207 aa). A coiled-coil region spans residues 36–98; sequence AGTEEKKKLV…AKLHREVRST (63 aa). Position 103 is a phosphothreonine (Thr103). Arg107 is modified (omega-N-methylarginine). Ser138 carries the post-translational modification Phosphoserine. A coiled-coil region spans residues 160-201; sequence GSEIIEELGEQRDQLERTKSRLVNTNENLSKSRKILRSMSRK. The chain crosses the membrane as a helical; Anchor for type IV membrane protein span at residues 209-229; sequence LSVIIVLELAILVGLVYYKFF. Residues 230–232 lie on the Vesicular side of the membrane; the sequence is RHH.

Belongs to the VTI1 family. Forms a SNARE complex with STX7, STX8 and VAMP8 which functions in the homotypic fusion of late endosomes. Component of the SNARE complex composed of STX7, STX8, VAMP7 and VIT1B that is required for heterotypic fusion of late endosomes with lysosomes. May interact with STX17. Interacts with CLINT1.

Its subcellular location is the early endosome membrane. The protein localises to the late endosome membrane. It localises to the lysosome membrane. The protein resides in the cytoplasmic granule. It is found in the recycling endosome membrane. Functionally, V-SNARE that mediates vesicle transport pathways through interactions with t-SNAREs on the target membrane. These interactions are proposed to mediate aspects of the specificity of vesicle trafficking and to promote fusion of the lipid bilayers. The polypeptide is Vesicle transport through interaction with t-SNAREs homolog 1B (Vti1b) (Rattus norvegicus (Rat)).